A 459-amino-acid polypeptide reads, in one-letter code: MVQKRTAELQGFHRSFKGQNPFELAFTLDPAQHGDSDFSPQCEARPDMPSSQPIDIPDAKKRGRKKKRCRATDSFSGRFEDVYQLQEDVLGEGAHARVQTCVNLITNQEYAVKIIEKQLGHIRSRVFREVEMLYQCQGHRNVLELIEFFEEEDRFYLVFEKMRGGSILSHIHRRRHFNELEASVVVQDVASALDFLHNKGIAHRDLKPENILCEHPNQVSPVKICDFDLGSGIKLNGDCSPISTPELLTPCGSAEYMAPEVVEAFSEEASIYDKRCDLWSLGVILYILLSGYPPFVGHCGSDCGWDRGEACPACQNMLFESIQEGKYEFPDKDWSHISFAAKDLISKLLVRDAKQRLSAAQVLQHPWVQGCAPENTLPTPLVLQRNSCAKDLTSFAAEAIAMNRQLAQCEEDAGQDQPVLIRATSRCLQLSPPSQSKLAQRRQRASLSATPVVLVGDRV.

Positions 28–67 are disordered; the sequence is LDPAQHGDSDFSPQCEARPDMPSSQPIDIPDAKKRGRKKK. The Nuclear localization signal motif lies at 60–66; the sequence is KKRGRKK. Ser-74 carries the post-translational modification Phosphoserine. Positions 84–368 constitute a Protein kinase domain; that stretch reads QLQEDVLGEG…AAQVLQHPWV (285 aa). Residues 90–98 and Lys-113 contribute to the ATP site; that span reads LGEGAHARV. 160 to 162 is a binding site for staurosporine; it reads EKM. The active-site Proton acceptor is Asp-205. Glu-209 contacts staurosporine. Phosphothreonine occurs at positions 244 and 249. Residues Cys-299, Cys-311, and Cys-314 each contribute to the Zn(2+) site. At Thr-379 the chain carries Phosphothreonine. A phosphoserine mark is found at Ser-431 and Ser-434. The MAP kinase binding signature appears at 438-442; the sequence is LAQRR. Ser-446 bears the Phosphoserine mark. A Phosphothreonine modification is found at Thr-450.

It belongs to the protein kinase superfamily. CAMK Ser/Thr protein kinase family. Monomer. Interacts with the C-terminal regions of EIF4G1 and EIF4G2; this interaction is promoted when MAPK pathways are repressed but repressed upon ERK proteins activation. Also binds to dephosphorylated MAPK3/ERK1 and MAPK1/ER2K. Interaction with phosphorylated MAPK3/ERK1 and MAPK1/ER2K protects it from dephosphorylation and inactivation. Interacts with ESR2 and EIF4E in the nucleus. Requires Mg(2+) as cofactor. Zn(2+) serves as cofactor. In terms of processing, dual phosphorylation of Thr-244 and Thr-249 activates the kinase. Phosphorylation of Thr-379 activates the kinase. Phosphorylated upon arsenic trioxide As(2)O(3) treatment. Phosphorylated by MAPK1/ERK2, MAPK11 and MAPK14. Dephosphorylated by PP2A.

It localises to the cytoplasm. The protein resides in the nucleus. It is found in the PML body. The enzyme catalyses L-seryl-[protein] + ATP = O-phospho-L-seryl-[protein] + ADP + H(+). It catalyses the reaction L-threonyl-[protein] + ATP = O-phospho-L-threonyl-[protein] + ADP + H(+). Inhibited by CGP57380 and staurosporine. Serine/threonine-protein kinase that phosphorylates SFPQ/PSF, HNRNPA1 and EIF4E. May play a role in the response to environmental stress and cytokines. Appears to regulate translation by phosphorylating EIF4E, thus increasing the affinity of this protein for the 7-methylguanosine-containing mRNA cap. Required for mediating PP2A-inhibition-induced EIF4E phosphorylation. Triggers EIF4E shuttling from cytoplasm to nucleus. Enhances the formation of EIF4F complex in pachytene spermatocytes, thus promoting mRNA translation during spermatogenesis. Displays a high basal kinase activity. Acts as a mediator of the suppressive effects of IFNgamma on hematopoiesis. Negative regulator for signals that control generation of arsenic trioxide As(2)O(3)-dependent apoptosis and anti-leukemic responses. Involved in anti-apoptotic signaling in response to serum withdrawal. The protein is MAP kinase-interacting serine/threonine-protein kinase 2 (Mknk2) of Rattus norvegicus (Rat).